The following is a 560-amino-acid chain: Membrane protein insertase YidC (560 aa).

Helical transmembrane passes span 5-25 (IINL…WQYF), 334-354 (AIDF…MNFF), 357-377 (YVGN…LLMF), 431-451 (LPIL…YVTI), 476-496 (LFGL…WPIL), and 522-542 (FMPL…LIYW).

The protein belongs to the OXA1/ALB3/YidC family. Type 1 subfamily. As to quaternary structure, interacts with the Sec translocase complex via SecD. Specifically interacts with transmembrane segments of nascent integral membrane proteins during membrane integration.

It is found in the cell inner membrane. Required for the insertion and/or proper folding and/or complex formation of integral membrane proteins into the membrane. Involved in integration of membrane proteins that insert both dependently and independently of the Sec translocase complex, as well as at least some lipoproteins. Aids folding of multispanning membrane proteins. This Rickettsia prowazekii (strain Madrid E) protein is Membrane protein insertase YidC.